A 129-amino-acid chain; its full sequence is Glycine cleavage system H protein (129 aa).

The Lipoyl-binding domain occupies 24–106 (TYTVGITEHA…YGQGWIFKIK (83 aa)). An N6-lipoyllysine modification is found at K65.

Belongs to the GcvH family. In terms of assembly, the glycine cleavage system is composed of four proteins: P, T, L and H. It depends on (R)-lipoate as a cofactor.

Its function is as follows. The glycine cleavage system catalyzes the degradation of glycine. The H protein shuttles the methylamine group of glycine from the P protein to the T protein. In Cronobacter sakazakii (strain ATCC BAA-894) (Enterobacter sakazakii), this protein is Glycine cleavage system H protein.